Reading from the N-terminus, the 424-residue chain is O-methyltransferase bfoD (424 aa).

Residue D275 participates in S-adenosyl-L-methionine binding. Catalysis depends on H326, which acts as the Proton acceptor.

Belongs to the class I-like SAM-binding methyltransferase superfamily. Cation-independent O-methyltransferase family.

The protein operates within secondary metabolite biosynthesis. Cytochrome P450 monooxygenase; part of the gene cluster that mediates the biosynthesis of bifonsecin B, a dimeric gamma-naphthopyrone. The first step in the biosynthesis of bifonsecin B is the production of gamma-naphthopyrone precursor YWA1 by the non-reducing polyketide synthase albA, via condensation of one acetyl-CoA starter unit with 6 malonyl-CoA units. YWA1 is then methylated by bfoE at position C-6 to yield foncesin which is further methylated at position C-8 by bfoD to produce fonsecin B. A key enzyme in the biosynthetic pathway is the cytochrome P450 monooxygenase bfoB which catalyzes the oxidative dimerization of fonsecin B to bifonsecin B. Bfob also catalyzes the oxidative dimerization of rubrofusarin B into nigerone. The stereoselectivity of bfoB is influenced by the two natural monomeric substrates; homodimerization of fonsecin B yields a stereochemically pure biaryl, M-foncerine B, while rubrofusarin B yields a mixture of enantiomers M- and P-nigerone. In Aspergillus brasiliensis (strain CBS 101740 / IMI 381727 / IBT 21946), this protein is O-methyltransferase bfoD.